The chain runs to 739 residues: Endoglucanase F (739 aa).

Positions 1–27 (MKKILAFLLTVALVAVVAIPQAVVSFA) are cleaved as a signal peptide. The segment at 28–470 (ADFNYGEALQ…AKMYEKYGGE (443 aa)) is catalytic. D84 serves as the catalytic Nucleophile. Active-site residues include H400, D438, and E447. One can recognise a CBM3 domain in the interval 480 to 639 (TPGEEFYVEA…NVRVWGKVPD (160 aa)). The Dockerin domain maps to 664-737 (PGIMLGDVNF…ILKLIEKFPA (74 aa)).

This sequence belongs to the glycosyl hydrolase 9 (cellulase E) family. Requires Ca(2+) as cofactor.

The enzyme catalyses Endohydrolysis of (1-&gt;4)-beta-D-glucosidic linkages in cellulose, lichenin and cereal beta-D-glucans.. In terms of biological role, this enzyme catalyzes the endohydrolysis of 1,4-beta-glucosidic linkages in cellulose, lichenin and cereal beta-D-glucans. In Acetivibrio thermocellus (strain ATCC 27405 / DSM 1237 / JCM 9322 / NBRC 103400 / NCIMB 10682 / NRRL B-4536 / VPI 7372) (Clostridium thermocellum), this protein is Endoglucanase F (celF).